A 416-amino-acid polypeptide reads, in one-letter code: UDP-N-acetylmuramoylalanine--D-glutamate ligase (416 aa).

104-110 (GSNGKST) lines the ATP pocket.

The protein belongs to the MurCDEF family.

Its subcellular location is the cytoplasm. It carries out the reaction UDP-N-acetyl-alpha-D-muramoyl-L-alanine + D-glutamate + ATP = UDP-N-acetyl-alpha-D-muramoyl-L-alanyl-D-glutamate + ADP + phosphate + H(+). It participates in cell wall biogenesis; peptidoglycan biosynthesis. Its function is as follows. Cell wall formation. Catalyzes the addition of glutamate to the nucleotide precursor UDP-N-acetylmuramoyl-L-alanine (UMA). The sequence is that of UDP-N-acetylmuramoylalanine--D-glutamate ligase from Francisella tularensis subsp. tularensis (strain FSC 198).